The sequence spans 226 residues: Transmembrane protein 204 (226 aa).

Residues 1–5 (MTVQK) lie on the Cytoplasmic side of the membrane. A helical membrane pass occupies residues 6 to 26 (LVATAVLVALVSLILNNAAAF). At 27–103 (TPNWVYQTLE…LQFDMMRACN (77 aa)) the chain is on the extracellular side. Residues 104–124 (LVATAALAVGQITFILGLTGL) traverse the membrane as a helical segment. At 125–136 (PLMSPESQCWEE) the chain is on the cytoplasmic side. The chain crosses the membrane as a helical span at residues 137-157 (AMAAAFQLASFVLVIGLVTFY). The Extracellular portion of the chain corresponds to 158-170 (RIGPYTNLSWSCY). Asparagine 164 is a glycosylation site (N-linked (GlcNAc...) asparagine). The helical transmembrane segment at 171 to 191 (LNIGACLLATLAAAMLIWNIL) threads the bilayer. At 192–226 (HRREDCMAPRVIVISRSLTARFRRGLDNDYVESPC) the chain is on the cytoplasmic side.

The protein localises to the cell junction. Its subcellular location is the adherens junction. It is found in the cell membrane. Its function is as follows. Can influence paracellular permeability. Appears to be involved in cell-cell interactions through adherens. This is Transmembrane protein 204 (Tmem204) from Rattus norvegicus (Rat).